We begin with the raw amino-acid sequence, 605 residues long: MGLPNTDSCRIRNFCIIAHIDHGKSTLADRLLEITRTLDRTQMGSAQVLDDMDLERERGITIKSHAIQMRYNAADGLEYTLNLIDTPGHVDFSYEVSRSLAACEGALLIVDATQGVEAQTIANLYLALDAGLDIIPVINKIDLPSSDVEGVARQIIDLMGVKRDEILAVSAKAGIGISELMESIVHRIPPPAVKNNEPLRALIFDSVFDAYRGAVVYLRIVEGLLKRGDKVRFFASDKLFTADEIGIMTMTRQPREQLASGNVGYLICSIKDVKDAKVGDTVTLADNPAVERLSGYKEVKPMVFSGLYPINSNEFEDLRESLEKLALNDASLIYTPETSVALGFGFRCGFLGLLHMEIIQERLEREYGVNIITTVPNVEYRVFLTNGEEVEVDNPSVMPEAGRIKQVEEPYVSMQIITLADYIGNIMKLGMERRGEYKTTDYLDTTRVIMHFEFPLAEVVFDFHDKLKSISKGYASMDYEYIGYRDSDLVKLDVMLNGDTVDALSIIVHRSKAYEWGKKLCQKLKGIIPKQMYEVAIQAAIGSRIISRETISAMRKNVLAKCYGGDISRKRKLLEKQKEGKKRMKQVGRVEVPQEAFLALLNIDE.

The region spanning 9–192 (CRIRNFCIIA…SIVHRIPPPA (184 aa)) is the tr-type G domain. GTP contacts are provided by residues 21-26 (DHGKST) and 139-142 (NKID).

The protein belongs to the TRAFAC class translation factor GTPase superfamily. Classic translation factor GTPase family. LepA subfamily.

It localises to the cell inner membrane. It catalyses the reaction GTP + H2O = GDP + phosphate + H(+). In terms of biological role, required for accurate and efficient protein synthesis under certain stress conditions. May act as a fidelity factor of the translation reaction, by catalyzing a one-codon backward translocation of tRNAs on improperly translocated ribosomes. Back-translocation proceeds from a post-translocation (POST) complex to a pre-translocation (PRE) complex, thus giving elongation factor G a second chance to translocate the tRNAs correctly. Binds to ribosomes in a GTP-dependent manner. The polypeptide is Elongation factor 4 (Chlorobium chlorochromatii (strain CaD3)).